The primary structure comprises 360 residues: Type II methyltransferase M.BglII (360 aa).

A disordered region spans residues 316–341 (TRQRKGSKPSLDSKAHPEEHHKKEIV). Basic and acidic residues predominate over residues 326–341 (LDSKAHPEEHHKKEIV).

The protein belongs to the N(4)/N(6)-methyltransferase family. N(4) subfamily.

It carries out the reaction a 2'-deoxycytidine in DNA + S-adenosyl-L-methionine = an N(4)-methyl-2'-deoxycytidine in DNA + S-adenosyl-L-homocysteine + H(+). A beta subtype methylase, recognizes the double-stranded sequence 5'-AGATCT-3', methylates C-5 on both strands, and protects the DNA from cleavage by the BglII endonuclease. This chain is Type II methyltransferase M.BglII, found in Bacillus subtilis.